The primary structure comprises 339 residues: ATPase GET3 (339 aa).

Residue 37 to 44 (KGGVGKTT) participates in ATP binding. Residue D66 is part of the active site. The ATP site is built by E237 and N264. Zn(2+) contacts are provided by C275 and C278.

This sequence belongs to the arsA ATPase family. As to quaternary structure, homodimer.

Its subcellular location is the cytoplasm. It is found in the endoplasmic reticulum. Its function is as follows. ATPase required for the post-translational delivery of tail-anchored (TA) proteins to the endoplasmic reticulum. Recognizes and selectively binds the transmembrane domain of TA proteins in the cytosol. This complex then targets to the endoplasmic reticulum by membrane-bound receptors, where the tail-anchored protein is released for insertion. This process is regulated by ATP binding and hydrolysis. ATP binding drives the homodimer towards the closed dimer state, facilitating recognition of newly synthesized TA membrane proteins. ATP hydrolysis is required for insertion. Subsequently, the homodimer reverts towards the open dimer state, lowering its affinity for the membrane-bound receptor, and returning it to the cytosol to initiate a new round of targeting. The protein is ATPase GET3 of Rhodotorula glutinis (Yeast).